The chain runs to 612 residues: Cytokine-like nuclear factor N-PAC (612 aa).

The PWWP domain maps to 22 to 81 (PKDLIWAKMKGFTPWPGMIVEPPLDLLTQQRRANTKCVFFFGSRNFAWIEENNIKPFEGP). The interval 168–270 (AVEGENNADS…GASSSSPTAR (103 aa)) is disordered. Low complexity-rich tracts occupy residues 177 to 193 (SSASPTVTAATPATAKS) and 201 to 220 (AKPVSAVSATKAAKASTTKS). Polar residues predominate over residues 228–240 (AHQTPTGANTSGL). The tract at residues 276 to 279 (DDLL) is interaction with histone H3. The tract at residues 319 to 612 (RDIVPSELTF…SSAVFVRSRF (294 aa)) is dehydrogenase domain. NAD(+) is bound by residues 329–343 (GFLGLGMMGSTIVKD), T421, and R564.

Belongs to the HIBADH-related family. NP60 subfamily. Binds to mononucleosomes. Interacts with male-specific lethal (MSL) histone acetyltransferase complex at least composed of mof, msl-1, msl-2 and msl-3.

It localises to the chromosome. Its function is as follows. Nucleosome-destabilizing factor that is recruited to genes during transcriptional activation and colocalizes with a subset of trimethylated 'Lys-36' histone H3 (H3K36me3)-enriched regions. Binds DNA (in vitro). Facilitates Pol II transcription through nucleosomes. Facilitates male-specific lethal (MSL) histone acetyltransferase complex targeting to active genes on the X chromosome. Stimulates the acetylation of 'Lys-56' of nucleosomal histone H3 (H3K56ac) by nej. The protein is Cytokine-like nuclear factor N-PAC of Drosophila pseudoobscura pseudoobscura (Fruit fly).